The sequence spans 291 residues: Protein ILRUN (291 aa).

The tract at residues 199 to 291 (NTQPHRKVEG…LHGPYPFGQS (93 aa)) is disordered. Residues 212–228 (PFASPQKNRQSDENNLT) are compositionally biased toward polar residues. A phosphoserine mark is found at S215, S222, and S265. A compositionally biased stretch (low complexity) spans 257–276 (LSQSSVNLSPSSPANNLSVV).

Interacts with IRF3; the interaction inhibits IRF3 binding to its DNA consensus sequence.

The protein resides in the cytoplasm. The protein localises to the nucleus. Its function is as follows. Negative regulator of innate antiviral response. Blocks IRF3-dependent cytokine production such as IFNA, IFNB and TNF. Interacts with IRF3 and inhibits IRF3 recruitment to type I IFN promoter sequences while also reducing nuclear levels of the coactivators EP300 and CREBBP. The polypeptide is Protein ILRUN (Mus musculus (Mouse)).